The sequence spans 187 residues: Tetraheme c-type cytochrome CymA (187 aa).

Residues 1-12 (MNWRALFKPSAK) are Cytoplasmic-facing. A helical membrane pass occupies residues 13 to 33 (YSILALLVVGIVIGVVGYFAT). Residues 34–187 (QQTLHATSTD…KGVAHPYPKG (154 aa)) are Periplasmic-facing. Residues Cys-46, Cys-49, His-64, Cys-75, Cys-78, His-79, Asp-97, Cys-136, Cys-139, His-140, Cys-173, Cys-176, His-177, and His-182 each coordinate heme c.

The protein belongs to the NapC/NirT/NrfH family. In terms of assembly, homodimer. Heme c is required as a cofactor.

The protein resides in the cell inner membrane. The enzyme catalyses a quinol + 2 Fe(III)-[cytochrome c](out) = a quinone + 2 Fe(II)-[cytochrome c](out) + 2 H(+)(out). Spectroscopic studies suggest that CymA requires a non-heme cofactor for quinol oxidation. Quinol dehydrogenase involved in several anaerobic electron transfer pathways. Acquires electrons from the membrane quinone pool and mediates their transfer to several periplasmic terminal reductases and redox shuttles, including the fumarate reductase FccA, the small tetraheme cytochrome (STC), the c-type cytochrome MtrA, the nitrate reductase NapA (either through NapB or directly), the nitrite reductase NrfA and probably also the DmsE subunit of dimethyl sulfoxide (DMSO) reductase. Required for growth on fumarate and on DMSO, and for the reduction of iron(III), manganese(IV), nitrite and nitrate. Not essential for growth on trimethylamine-N-oxide (TMAO). The protein is Tetraheme c-type cytochrome CymA of Shewanella oneidensis (strain ATCC 700550 / JCM 31522 / CIP 106686 / LMG 19005 / NCIMB 14063 / MR-1).